The chain runs to 244 residues: ATP-dependent Clp protease ATP-binding subunit CLPT4, chloroplastic (244 aa).

The transit peptide at 1–64 (MQALQASRLT…WRSSGRVITR (64 aa)) directs the protein to the chloroplast. Residues 30-48 (SRPISSGVSSSQELSSRSS) show a composition bias toward low complexity. Disordered stretches follow at residues 30 to 55 (SRPI…TKSW) and 220 to 244 (GRRY…VSFL).

The protein belongs to the ClpA/ClpB family.

It is found in the plastid. The protein resides in the chloroplast. Accessory protein regulating the assembly of the plastid Clp protease system. This chain is ATP-dependent Clp protease ATP-binding subunit CLPT4, chloroplastic, found in Chlamydomonas reinhardtii (Chlamydomonas smithii).